Consider the following 430-residue polypeptide: RNA polymerase-associated protein LEO1 (430 aa).

Over residues 1–10 (MSSSEGNSDA) the composition is skewed to polar residues. The segment at 1 to 128 (MSSSEGNSDA…SRGSLNDLQG (128 aa)) is disordered. Positions 18 to 30 (KSSTPSSRGSSPD) are enriched in low complexity. Positions 99–119 (REGKPKESNTRARLSDSDAES) are enriched in basic and acidic residues. 2 coiled-coil regions span residues 326–347 (TRRE…RTQM) and 409–429 (EEYR…DEES). The segment at 349–430 (RNNFKVRGPR…QIVTSDEESD (82 aa)) is disordered.

The protein belongs to the LEO1 family. Component of the PAF1 complex which consists of at least cdc-73, ctr-9, leo-1, pafo-1 and rtfo-1.

It localises to the nucleus. Its subcellular location is the cytoplasm. Component of the PAF1 complex which is a multifunctional complex involved in transcription initiation via genetic interactions with TATA-binding proteins, elongation and transcription-coupled histone modification. In Caenorhabditis elegans, this protein is RNA polymerase-associated protein LEO1.